The primary structure comprises 277 residues: Serine protease 33 (277 aa).

Residues 1-24 (MRGASHLQILLLLVLGTRMQECAA) form the signal peptide. Positions 34 to 276 (IVGGRDAQDG…YSPWIQARLS (243 aa)) constitute a Peptidase S1 domain. Cys-59 and Cys-75 form a disulfide bridge. Active-site charge relay system residues include His-74 and Asp-123. 3 disulfide bridges follow: Cys-157-Cys-234, Cys-190-Cys-213, and Cys-224-Cys-252. The active-site Charge relay system is the Ser-228.

Belongs to the peptidase S1 family. Not glycosylated. Widely expressed.

It is found in the secreted. Functionally, serine protease that has amidolytic activity, cleaving its substrates before Arg residues. This Mus musculus (Mouse) protein is Serine protease 33 (Prss33).